A 1597-amino-acid polypeptide reads, in one-letter code: Protein STU1 (1597 aa).

Disordered stretches follow at residues 220–265, 519–958, 1005–1154, and 1307–1332; these read GNSS…PSSS, DKVN…RPIH, DAEA…ELNT, and SQRP…SSLV. Basic and acidic residues predominate over residues 535-552; the sequence is APRESLKEVMRRSRESSV. The span at 577–605 shows a compositional bias: low complexity; it reads SSGLVGRSLSGSNLTDRSNRLSSTSTSSR. Composition is skewed to polar residues over residues 610 to 622 and 632 to 645; these read AVSD…QMTR and PSLT…SLTR. 2 stretches are compositionally biased toward basic and acidic residues: residues 660 to 673 and 694 to 708; these read GSRE…DQNR and ESSR…DPSR. Over residues 709 to 726 the composition is skewed to polar residues; it reads ESSLAPSVHSSTAISRES. Residues 765–781 are compositionally biased toward low complexity; it reads EETMNEVTTAEATATTA. 2 stretches are compositionally biased toward polar residues: residues 791–801 and 808–822; these read PRESTPPNSSP and PATQ…TGKS. Residues 832–846 show a composition bias toward basic and acidic residues; it reads ELSRDLNGESKHLKE. Polar residues-rich tracts occupy residues 918-933, 1013-1025, and 1036-1045; these read DSQS…QSEP, TEQT…SDTA, and NSEQGPSTEP. Basic and acidic residues predominate over residues 1081-1091; it reads ASDEIETDHTK. Residues 1108–1119 are compositionally biased toward acidic residues; that stretch reads EPMEICDSDNDA. Positions 1122-1139 are enriched in polar residues; that stretch reads NGTNPDTKCQDQQDSTTP. An HEAT repeat occupies 1537–1573; the sequence is PSYETQLLALITELISDPDPLVRRVTVGLVVRVLRVS.

This sequence belongs to the CLASP family. In terms of assembly, interacts with microtubules.

The protein localises to the cytoplasm. The protein resides in the cytoskeleton. It localises to the nucleus. Its subcellular location is the spindle. Functionally, microtubule binding protein that promotes the stabilization of dynamic microtubules. Required for mitotic spindle formation. The sequence is that of Protein STU1 (STU1) from Yarrowia lipolytica (strain CLIB 122 / E 150) (Yeast).